Consider the following 193-residue polypeptide: Ribonuclease HII (193 aa).

Residues 15 to 193 form the RNase H type-2 domain; sequence YIVAGVDEAG…SYHRRSFKSC (179 aa). A divalent metal cation is bound by residues Asp-21, Glu-22, and Asp-112.

Belongs to the RNase HII family. Mn(2+) is required as a cofactor. The cofactor is Mg(2+).

It localises to the cytoplasm. The catalysed reaction is Endonucleolytic cleavage to 5'-phosphomonoester.. Functionally, endonuclease that specifically degrades the RNA of RNA-DNA hybrids. The sequence is that of Ribonuclease HII (rnhB) from Rickettsia prowazekii (strain Madrid E).